The sequence spans 240 residues: MNAEKSPVNHNVDHEEIAKFEAVASHWWDLEGEFKPLHRINPLRLGYIAERAGGLFGKKVLDVGCGGGILAESMAREGATVTGLDMGFEPLQVAKLHALESGIQVDYVQETVEEHAAKHAGQYDVVTCMEMLEHVPDPQSVVRACAQLVKPGGDVFFSTLNRNGKSWLMAVVGAEYILRMVPKGTHDVKKFIKPAELLGWVVQTSLKERHMTGLHYNPITNTFKLGPGVDVNYMLHTQNK.

Positions 44, 64, 85, and 129 each coordinate S-adenosyl-L-methionine.

The protein belongs to the methyltransferase superfamily. UbiG/COQ3 family.

The enzyme catalyses a 3-demethylubiquinol + S-adenosyl-L-methionine = a ubiquinol + S-adenosyl-L-homocysteine + H(+). It catalyses the reaction a 3-(all-trans-polyprenyl)benzene-1,2-diol + S-adenosyl-L-methionine = a 2-methoxy-6-(all-trans-polyprenyl)phenol + S-adenosyl-L-homocysteine + H(+). The protein operates within cofactor biosynthesis; ubiquinone biosynthesis. Its function is as follows. O-methyltransferase that catalyzes the 2 O-methylation steps in the ubiquinone biosynthetic pathway. This is Ubiquinone biosynthesis O-methyltransferase from Escherichia coli O6:H1 (strain CFT073 / ATCC 700928 / UPEC).